Reading from the N-terminus, the 485-residue chain is Cholesterol 16,22-dihydroxylase CYP90G4 (485 aa).

A helical transmembrane segment spans residues 4 to 24 (VVILFFLFPTLLVLVVAVLGL). Residue cysteine 432 coordinates heme.

It belongs to the cytochrome P450 family. Mainly expressed in leaves and, at low levels, in roots and stems.

Its subcellular location is the membrane. It carries out the reaction cholesterol + 2 reduced [NADPH--hemoprotein reductase] + 2 O2 = (16S,22S)-dihydroxycholesterol + 2 oxidized [NADPH--hemoprotein reductase] + 2 H2O + 2 H(+). The protein operates within steroid metabolism; cholesterol metabolism. Its function is as follows. Involved in the biosynthesis of spiroketal steroid and saponin natural products from cholesterol such as diosgenin and analogs (e.g. furostanol and spirostanol), plant defense compounds used as main precursors for the industrial production of steroid hormones. During the 5,6-spiroketalization of cholesterol, catalyzes the hydroxylation of cholesterol to form 16S,22S-dihydroxycholesterol and, possibly, the subsequent conversion of 16S,22S-dihydroxycholesterol into 16-oxo-22-hydroxy-cholesterol and 16-hydroxy-22-oxo-cholesterol. 16-hydroxy-22-oxo-cholesterol submit a spontaneous reaction leading to the production of furostanol-type steroid diastereomers, precursors of diosgenin. This chain is Cholesterol 16,22-dihydroxylase CYP90G4, found in Paris polyphylla (Daiswa polyphylla).